The following is a 753-amino-acid chain: Small G protein signaling modulator 3 homolog (753 aa).

Residues 115–306 (GIPHSMRPQL…RIWDFFFYQG (192 aa)) form the Rab-GAP TBC domain. In terms of domain architecture, SH3 spans 482-541 (SRRRRAKALLDFERHDDDELGFRKNDIITIISQKDEHCWVGELNGLRGWFPAKFVDILDE). The RUN domain occupies 557-720 (GITDLIRGTL…FAFSLSPDWE (164 aa)).

It belongs to the small G protein signaling modulator family.

The chain is Small G protein signaling modulator 3 homolog (sgsm3) from Xenopus laevis (African clawed frog).